Consider the following 740-residue polypeptide: Phosphoribosylformylglycinamidine synthase subunit PurL (740 aa).

His49 is an active-site residue. Positions 52 and 91 each coordinate ATP. Glu93 serves as a coordination point for Mg(2+). Substrate is bound by residues 94 to 97 (SHNH) and Arg116. The active-site Proton acceptor is the His95. Asp117 provides a ligand contact to Mg(2+). Residue Gln245 participates in substrate binding. Asp273 lines the Mg(2+) pocket. 317–319 (ESQ) provides a ligand contact to substrate. 2 residues coordinate ATP: Asp501 and Gly538. Asn539 is a binding site for Mg(2+). Ser541 provides a ligand contact to substrate.

This sequence belongs to the FGAMS family. As to quaternary structure, monomer. Part of the FGAM synthase complex composed of 1 PurL, 1 PurQ and 2 PurS subunits.

Its subcellular location is the cytoplasm. The catalysed reaction is N(2)-formyl-N(1)-(5-phospho-beta-D-ribosyl)glycinamide + L-glutamine + ATP + H2O = 2-formamido-N(1)-(5-O-phospho-beta-D-ribosyl)acetamidine + L-glutamate + ADP + phosphate + H(+). Its pathway is purine metabolism; IMP biosynthesis via de novo pathway; 5-amino-1-(5-phospho-D-ribosyl)imidazole from N(2)-formyl-N(1)-(5-phospho-D-ribosyl)glycinamide: step 1/2. Functionally, part of the phosphoribosylformylglycinamidine synthase complex involved in the purines biosynthetic pathway. Catalyzes the ATP-dependent conversion of formylglycinamide ribonucleotide (FGAR) and glutamine to yield formylglycinamidine ribonucleotide (FGAM) and glutamate. The FGAM synthase complex is composed of three subunits. PurQ produces an ammonia molecule by converting glutamine to glutamate. PurL transfers the ammonia molecule to FGAR to form FGAM in an ATP-dependent manner. PurS interacts with PurQ and PurL and is thought to assist in the transfer of the ammonia molecule from PurQ to PurL. In Sulfurovum sp. (strain NBC37-1), this protein is Phosphoribosylformylglycinamidine synthase subunit PurL.